Here is a 499-residue protein sequence, read N- to C-terminus: Lysine--tRNA ligase (499 aa).

Mg(2+) contacts are provided by Glu-409 and Glu-416.

This sequence belongs to the class-II aminoacyl-tRNA synthetase family. As to quaternary structure, homodimer. Mg(2+) is required as a cofactor.

The protein localises to the cytoplasm. It catalyses the reaction tRNA(Lys) + L-lysine + ATP = L-lysyl-tRNA(Lys) + AMP + diphosphate. This is Lysine--tRNA ligase from Pseudomonas fluorescens (strain Pf0-1).